The following is a 406-amino-acid chain: CRISP/Allergen/PR-1 (406 aa).

Residues 1 to 18 form the signal peptide; sequence MHFQVILMMMWLWLEAEG. N39 carries N-linked (GlcNAc...) asparagine glycosylation. An SCP domain is found at 58 to 205; it reads LREHNKLRSR…TFKDLYTCNY (148 aa).

This sequence belongs to the CRISP family. Contains 9 disulfide bonds. In terms of tissue distribution, expressed by the venom gland.

Its subcellular location is the secreted. The protein is CRISP/Allergen/PR-1 of Trittame loki (Brush-footed trapdoor spider).